Reading from the N-terminus, the 102-residue chain is Large ribosomal subunit protein bL21 (102 aa).

This sequence belongs to the bacterial ribosomal protein bL21 family. As to quaternary structure, part of the 50S ribosomal subunit. Contacts protein L20.

In terms of biological role, this protein binds to 23S rRNA in the presence of protein L20. This chain is Large ribosomal subunit protein bL21, found in Citrifermentans bemidjiense (strain ATCC BAA-1014 / DSM 16622 / JCM 12645 / Bem) (Geobacter bemidjiensis).